A 525-amino-acid chain; its full sequence is Probable protein kinase UbiB (525 aa).

Residues 118–500 (EFERVPVASA…QRRTNRLLQA (383 aa)) form the Protein kinase domain. Residues 124–132 (VASASIAQV) and Lys-150 contribute to the ATP site. Asp-285 acts as the Proton acceptor in catalysis. The helical transmembrane segment at 501–521 (LLVFGLAVGAGAVIARVLIVL) threads the bilayer.

The protein belongs to the ABC1 family. UbiB subfamily.

The protein resides in the cell inner membrane. It participates in cofactor biosynthesis; ubiquinone biosynthesis [regulation]. Is probably a protein kinase regulator of UbiI activity which is involved in aerobic coenzyme Q (ubiquinone) biosynthesis. This is Probable protein kinase UbiB from Burkholderia mallei (strain SAVP1).